The primary structure comprises 499 residues: Cytochrome P450 705A12 (499 aa).

Residues 4–24 (LIIVDFQNISIFILLCLFSFL) traverse the membrane as a helical segment. Cysteine 439 serves as a coordination point for heme.

It belongs to the cytochrome P450 family. Requires heme as cofactor.

It localises to the membrane. May be involved in hydroxylation of the triterpene marneral. The chain is Cytochrome P450 705A12 from Arabidopsis thaliana (Mouse-ear cress).